The following is a 411-amino-acid chain: Citrate synthase (411 aa).

Residues H304 and D363 contribute to the active site.

Belongs to the citrate synthase family.

It catalyses the reaction oxaloacetate + acetyl-CoA + H2O = citrate + CoA + H(+). It participates in carbohydrate metabolism; tricarboxylic acid cycle; isocitrate from oxaloacetate: step 1/2. This Rickettsia parkeri protein is Citrate synthase (gltA).